Reading from the N-terminus, the 47-residue chain is Conotoxin Bu10 (47 aa).

Residues 1–22 (DSRGTQLHRALRKATILSVSAR) constitute a propeptide that is removed on maturation. Intrachain disulfides connect C23-C37, C30-C41, and C36-C46. Position 46 is a cysteine amide (C46).

This sequence belongs to the conotoxin O1 superfamily. In terms of tissue distribution, expressed by the venom duct.

Its subcellular location is the secreted. This is Conotoxin Bu10 from Conus bullatus (Bubble cone).